The sequence spans 534 residues: UDP-glucuronosyltransferase 1A3 (534 aa).

Residues 1–28 (MATGLQVPLPWLATGLLLLLSVQPWAES) form the signal peptide. N-linked (GlcNAc...) asparagine glycans are attached at residues asparagine 119, asparagine 142, asparagine 296, and asparagine 348. A helical membrane pass occupies residues 492–508 (VIGFLLAVVLTVAFITF).

It belongs to the UDP-glycosyltransferase family. Homodimer. Homooligomer. Interacts with UGT1A1, UGT1A4, UGT1A6, UGT1A7, UGT1A8, UGT1A9 and UGT1A10 to form heterodimers. Isoform 1 interacts with isoform 2/i2 suggesting that oligomerization is involved in negative regulation of transferase activity by isoform 2. Isoform 1 also interacts with respective i2 isoforms of UGT1A1, UGT1A4, UGT1A6, UGT1A7, UGT1A8, UGT1A9 and UGT1A10. In terms of tissue distribution, expressed in liver, kidney, colon, esophagus and small intestine. As to expression, expressed in liver, kidney and colon. Not expressed in esophagus and small intestine.

The protein resides in the endoplasmic reticulum membrane. The catalysed reaction is glucuronate acceptor + UDP-alpha-D-glucuronate = acceptor beta-D-glucuronoside + UDP + H(+). It carries out the reaction 17beta-estradiol + UDP-alpha-D-glucuronate = 17beta-estradiol 3-O-(beta-D-glucuronate) + UDP + H(+). It catalyses the reaction 17beta-estradiol + UDP-alpha-D-glucuronate = 17beta-estradiol 17-O-(beta-D-glucuronate) + UDP + H(+). The enzyme catalyses 17alpha-estradiol + UDP-alpha-D-glucuronate = 17alpha-estradiol 3-O-(beta-D-glucuronate) + UDP + H(+). The catalysed reaction is estrone + UDP-alpha-D-glucuronate = estrone 3-O-(beta-D-glucuronate) + UDP + H(+). It carries out the reaction chenodeoxycholate + UDP-alpha-D-glucuronate = chenodeoxycholoyl-24-O-(beta-D-glucuronate) + UDP. It catalyses the reaction deoxycholate + UDP-alpha-D-glucuronate = deoxycholoyl-24-O-(beta-D-glucuronate) + UDP. The enzyme catalyses lithocholate + UDP-alpha-D-glucuronate = lithocholoyl-24-O-(beta-D-glucuronate) + UDP. The catalysed reaction is hyodeoxycholate + UDP-alpha-D-glucuronate = hyodeoxycholoyl-24-O-(beta-D-glucuronate) + UDP. It carries out the reaction hyocholate + UDP-alpha-D-glucuronate = hyocholoyl-24-O-(beta-D-glucuronate) + UDP. It catalyses the reaction calcidiol + UDP-alpha-D-glucuronate = calcidiol 25-O-(beta-D-glucuronide) + UDP + H(+). The enzyme catalyses (E)-ferulate + UDP-alpha-D-glucuronate = (E)-4-O-(beta-D-glucuronosyl)-ferulate + UDP + H(+). The catalysed reaction is (E)-ferulate + UDP-alpha-D-glucuronate = (E)-ferulic acid beta-D-glucuronate ester + UDP. It carries out the reaction losartan + UDP-alpha-D-glucuronate = losartan-2-N-beta-D-glucuronide + UDP. It catalyses the reaction candesartan + UDP-alpha-D-glucuronate = candesartan-2-N-beta-D-glucuronide + UDP. The enzyme catalyses zolasartan + UDP-alpha-D-glucuronate = zolarsartan-2-N-beta-D-glucuronide + UDP. In terms of biological role, UDP-glucuronosyltransferase (UGT) that catalyzes phase II biotransformation reactions in which lipophilic substrates are conjugated with glucuronic acid to increase the metabolite's water solubility, thereby facilitating excretion into either the urine or bile. Essential for the elimination and detoxification of drugs, xenobiotics and endogenous compounds. Catalyzes the glucuronidation of endogenous estrogen hormones such as estradiol and estrone. Contributes to bile acid (BA) detoxification by catalyzing the glucuronidation of BA substrates, which are natural detergents for dietary lipids absorption. Involved in the glucuronidation of calcidiol, which is the major circulating form of vitamin D3, essential for the regulation of calcium and phosphate homeostasis. Involved in the glucuronidation of the phytochemical ferulic acid at the phenolic or the carboxylic acid group. Involved in the glucuronidation of the AGTR1 angiotensin receptor antagonists losartan, candesartan and zolarsartan, which can inhibit the effect of angiotensin II. Its function is as follows. Lacks UDP-glucuronosyltransferase (UGT) activity but acts as a negative regulator of isoform 1. In Homo sapiens (Human), this protein is UDP-glucuronosyltransferase 1A3.